A 151-amino-acid polypeptide reads, in one-letter code: MNEPVLFLLLLLAIGVIAKNQSLIIAIAVLLAIKLFGLEARLLPAIQAKGINWGVTVITVAVLAPIATGEIGFKQLIGSLQSASAWIALLFGIFVALIAKGGVMLLASDPHITASLVLGTVIAVSLFHGVAVGPLIGAGIAYVVIKMVEYF.

4 consecutive transmembrane segments (helical) span residues 5 to 25 (VLFLLLLLAIGVIAKNQSLII), 53 to 73 (WGVTVITVAVLAPIATGEIGF), 86 to 106 (WIALLFGIFVALIAKGGVMLL), and 116 to 136 (LVLGTVIAVSLFHGVAVGPLI).

It belongs to the UPF0756 family.

The protein localises to the cell membrane. The sequence is that of UPF0756 membrane protein GTNG_2661 from Geobacillus thermodenitrificans (strain NG80-2).